The following is a 186-amino-acid chain: MSDSASISSGIADRYATAIFELAKEENNIGALEAGADLLDAALKESAEFRDLISSPVYSRDEQAGAIGAIAKKLELAPMLSNALALMASKRRLFVLPQLVASLRALIAEEKGEMTADVISAQPLSKANLDELTKVLSASADKTVKVNATVDNSLIGGLVVKMGSKMIDTSIRAKLNALQNTMKEVG.

Belongs to the ATPase delta chain family. In terms of assembly, F-type ATPases have 2 components, F(1) - the catalytic core - and F(0) - the membrane proton channel. F(1) has five subunits: alpha(3), beta(3), gamma(1), delta(1), epsilon(1). CF(0) has four main subunits: a(1), b(1), b'(1) and c(10-14). The alpha and beta chains form an alternating ring which encloses part of the gamma chain. F(1) is attached to F(0) by a central stalk formed by the gamma and epsilon chains, while a peripheral stalk is formed by the delta, b and b' chains.

Its subcellular location is the cell inner membrane. F(1)F(0) ATP synthase produces ATP from ADP in the presence of a proton or sodium gradient. F-type ATPases consist of two structural domains, F(1) containing the extramembraneous catalytic core and F(0) containing the membrane proton channel, linked together by a central stalk and a peripheral stalk. During catalysis, ATP synthesis in the catalytic domain of F(1) is coupled via a rotary mechanism of the central stalk subunits to proton translocation. Its function is as follows. This protein is part of the stalk that links CF(0) to CF(1). It either transmits conformational changes from CF(0) to CF(1) or is implicated in proton conduction. The protein is ATP synthase subunit delta of Dinoroseobacter shibae (strain DSM 16493 / NCIMB 14021 / DFL 12).